A 362-amino-acid polypeptide reads, in one-letter code: Peptide chain release factor 1 (362 aa).

Position 237 is an N5-methylglutamine (glutamine 237).

The protein belongs to the prokaryotic/mitochondrial release factor family. Methylated by PrmC. Methylation increases the termination efficiency of RF1.

It is found in the cytoplasm. Its function is as follows. Peptide chain release factor 1 directs the termination of translation in response to the peptide chain termination codons UAG and UAA. The chain is Peptide chain release factor 1 from Aliivibrio fischeri (strain ATCC 700601 / ES114) (Vibrio fischeri).